Reading from the N-terminus, the 193-residue chain is dCTP deaminase (193 aa).

Residues 110–115 (RSSLAR), aspartate 128, 136–138 (VLE), tyrosine 171, lysine 178, and glutamine 182 each bind dCTP. Glutamate 138 acts as the Proton donor/acceptor in catalysis. Residues 171–193 (YNKRKNAKYKDQQDAVASRISQD) form a disordered region.

It belongs to the dCTP deaminase family. As to quaternary structure, homotrimer.

The catalysed reaction is dCTP + H2O + H(+) = dUTP + NH4(+). It participates in pyrimidine metabolism; dUMP biosynthesis; dUMP from dCTP (dUTP route): step 1/2. Functionally, catalyzes the deamination of dCTP to dUTP. This chain is dCTP deaminase, found in Shewanella oneidensis (strain ATCC 700550 / JCM 31522 / CIP 106686 / LMG 19005 / NCIMB 14063 / MR-1).